Consider the following 184-residue polypeptide: Ribosome-recycling factor (184 aa).

Residues Asp-133–Arg-153 are disordered.

It belongs to the RRF family.

The protein localises to the cytoplasm. Responsible for the release of ribosomes from messenger RNA at the termination of protein biosynthesis. May increase the efficiency of translation by recycling ribosomes from one round of translation to another. The sequence is that of Ribosome-recycling factor from Staphylococcus saprophyticus subsp. saprophyticus (strain ATCC 15305 / DSM 20229 / NCIMB 8711 / NCTC 7292 / S-41).